A 137-amino-acid chain; its full sequence is MPTINQLVRKPRRAQVTKSKSPAMNVGYNSRKKVQTKLASPQKRGVATRVGTMTPKKPNSALRKFARVRLSNLMEVTAYIPGIGHNLQEHSVVLLRGGRVKDLPGVRYHIVRGALDTAGVADRKQSRSKYGAKKPKA.

Positions 1 to 57 are disordered; that stretch reads MPTINQLVRKPRRAQVTKSKSPAMNVGYNSRKKVQTKLASPQKRGVATRVGTMTPKK. At D102 the chain carries 3-methylthioaspartic acid.

This sequence belongs to the universal ribosomal protein uS12 family. Part of the 30S ribosomal subunit. Contacts proteins S8 and S17. May interact with IF1 in the 30S initiation complex.

Its function is as follows. With S4 and S5 plays an important role in translational accuracy. Interacts with and stabilizes bases of the 16S rRNA that are involved in tRNA selection in the A site and with the mRNA backbone. Located at the interface of the 30S and 50S subunits, it traverses the body of the 30S subunit contacting proteins on the other side and probably holding the rRNA structure together. The combined cluster of proteins S8, S12 and S17 appears to hold together the shoulder and platform of the 30S subunit. This chain is Small ribosomal subunit protein uS12, found in Lactococcus lactis subsp. lactis (strain IL1403) (Streptococcus lactis).